A 290-amino-acid chain; its full sequence is 4-hydroxybenzoate octaprenyltransferase (290 aa).

8 helical membrane passes run 23 to 43, 46 to 66, 99 to 119, 141 to 161, 163 to 183, 213 to 233, 234 to 254, and 268 to 288; these read IGALLLLWPTLWALWVATPGV, LWILAVFVAGVWLMRAAGCVV, LFVVLVLISFLLVLTLNTMTI, LPQVVLGAAFGWSIPMAFAAV, ESVPLSCWLMFLANILWAVAY, LIIGIFQIGVLALMAIIGELN, GLGWGYYWSILVAGALFVYQQ, and AFMNNNYVGLVLFLGLAMSYW.

The protein belongs to the UbiA prenyltransferase family. It depends on Mg(2+) as a cofactor.

The protein localises to the cell inner membrane. It catalyses the reaction all-trans-octaprenyl diphosphate + 4-hydroxybenzoate = 4-hydroxy-3-(all-trans-octaprenyl)benzoate + diphosphate. It functions in the pathway cofactor biosynthesis; ubiquinone biosynthesis. Catalyzes the prenylation of para-hydroxybenzoate (PHB) with an all-trans polyprenyl group. Mediates the second step in the final reaction sequence of ubiquinone-8 (UQ-8) biosynthesis, which is the condensation of the polyisoprenoid side chain with PHB, generating the first membrane-bound Q intermediate 3-octaprenyl-4-hydroxybenzoate. In Escherichia coli (strain UTI89 / UPEC), this protein is 4-hydroxybenzoate octaprenyltransferase.